The chain runs to 205 residues: Heat shock protein beta-11 (205 aa).

The sHSP domain occupies 67 to 180; that stretch reads VSPMTTFKPI…NERVIPITYT (114 aa). Residues 184-205 are disordered; that stretch reads KNPALQNSEPENQAVEAEAAEN. The segment covering 192–205 has biased composition (low complexity); that stretch reads EPENQAVEAEAAEN.

It belongs to the small heat shock protein (HSP20) family. Expressed specifically in the rostral-most somites at 24 hpf. At 48 hpf, expression continues in the rostral-most somites and also in the notochord. Somite expression was restricted to the vicinity of the horizontal myoseptum. In adults, expressed in the heart.

This is Heat shock protein beta-11 (hspb11) from Danio rerio (Zebrafish).